The sequence spans 833 residues: Leucine--tRNA ligase (833 aa).

The 'HIGH' region signature appears at 41–52 (PYPSGAGLHVGH). The 'KMSKS' region motif lies at 610–614 (KMSKS). Residue K613 coordinates ATP.

It belongs to the class-I aminoacyl-tRNA synthetase family.

It is found in the cytoplasm. The enzyme catalyses tRNA(Leu) + L-leucine + ATP = L-leucyl-tRNA(Leu) + AMP + diphosphate. In Streptococcus pyogenes serotype M5 (strain Manfredo), this protein is Leucine--tRNA ligase.